A 66-amino-acid chain; its full sequence is Conotoxin Lt5.6 (66 aa).

The N-terminal stretch at 1 to 19 is a signal peptide; it reads MLCLPVFIILLLLASPAAP. Residues 20–54 constitute a propeptide that is removed on maturation; it reads KSLETRIQNDLIRAGLTDADLKTEKGFLSGLLNVA.

It belongs to the conotoxin T superfamily. Post-translationally, contains 2 disulfide bonds that can be either 'C1-C3, C2-C4' or 'C1-C4, C2-C3', since these disulfide connectivities have been observed for conotoxins with cysteine framework V (for examples, see AC P0DQQ7 and AC P81755). As to expression, expressed by the venom duct.

It is found in the secreted. The polypeptide is Conotoxin Lt5.6 (Conus litteratus (Lettered cone)).